We begin with the raw amino-acid sequence, 1061 residues long: Protein pid-5 (1061 aa).

This sequence belongs to the peptidase M24B family. In terms of assembly, may interact with pid-2, app-1 and prmt-5.

The protein localises to the cytoplasm. It is found in the perinuclear region. Its subcellular location is the P-body. In terms of biological role, together with pid-4, it is involved in gene silencing mediated by a class of 21 nucleotide PIWI-interacting RNAs (piRNAs) that possess a uracil residue at the 5'-end (also called 21U-RNAs) and guide the Piwi protein prg-1 to its DNA targets for silencing. Together with pid-4, it is required for the biogenesis of secondary and tertiary 22G-siRNAs. Specifically, promotes the production of 22G-siRNAs from the 5' end of target mRNAs. Together with pid-4, plays a role in small RNA-directed transgenerational epigenetic inheritance (also called RNAe) over several generations and germline immortality. Together with pid-4, plays a role in the formation of liquid-like condensates in the cytoplasm called Z granules. This is Protein pid-5 from Caenorhabditis elegans.